The following is a 122-amino-acid chain: Large ribosomal subunit protein uL14c (122 aa).

The protein belongs to the universal ribosomal protein uL14 family. Part of the 50S ribosomal subunit.

It localises to the plastid. The protein resides in the chloroplast. Functionally, binds to 23S rRNA. This Huperzia lucidula (Shining clubmoss) protein is Large ribosomal subunit protein uL14c.